Here is a 459-residue protein sequence, read N- to C-terminus: Cysteine--tRNA ligase (459 aa).

Residue C31 participates in Zn(2+) binding. Residues 33–43 (PTVYYNPHIGN) carry the 'HIGH' region motif. C216, H241, and E245 together coordinate Zn(2+). A 'KMSKS' region motif is present at residues 274–278 (KMSKS). K277 is an ATP binding site.

Belongs to the class-I aminoacyl-tRNA synthetase family. As to quaternary structure, monomer. Zn(2+) is required as a cofactor.

The protein localises to the cytoplasm. The catalysed reaction is tRNA(Cys) + L-cysteine + ATP = L-cysteinyl-tRNA(Cys) + AMP + diphosphate. This chain is Cysteine--tRNA ligase, found in Rickettsia peacockii (strain Rustic).